Here is a 184-residue protein sequence, read N- to C-terminus: uncharacterized protein (184 aa).

A disordered region spans residues 130–149; sequence DKDDDKKKKKKDDKKDDPCN.

Its subcellular location is the virion. This is an uncharacterized protein from Acanthamoeba polyphaga (Amoeba).